The sequence spans 162 residues: Transcription elongation factor GreA (162 aa).

Positions 44 to 69 form a coiled coil; the sequence is SENAEYEAAREKQAFVEARIKHLEDI.

Belongs to the GreA/GreB family.

In terms of biological role, necessary for efficient RNA polymerase transcription elongation past template-encoded arresting sites. The arresting sites in DNA have the property of trapping a certain fraction of elongating RNA polymerases that pass through, resulting in locked ternary complexes. Cleavage of the nascent transcript by cleavage factors such as GreA or GreB allows the resumption of elongation from the new 3'terminus. GreA releases sequences of 2 to 3 nucleotides. This Rickettsia bellii (strain RML369-C) protein is Transcription elongation factor GreA.